We begin with the raw amino-acid sequence, 340 residues long: Methionine import ATP-binding protein MetN 2 (340 aa).

Residues 2–241 (ITLQNVVKEY…PQEKVTQRFV (240 aa)) form the ABC transporter domain. Residue 38 to 45 (GYSGAGKS) participates in ATP binding.

Belongs to the ABC transporter superfamily. Methionine importer (TC 3.A.1.24) family. As to quaternary structure, the complex is composed of two ATP-binding proteins (MetN), two transmembrane proteins (MetI) and a solute-binding protein (MetQ).

It is found in the cell membrane. It catalyses the reaction L-methionine(out) + ATP + H2O = L-methionine(in) + ADP + phosphate + H(+). The enzyme catalyses D-methionine(out) + ATP + H2O = D-methionine(in) + ADP + phosphate + H(+). Functionally, part of the ABC transporter complex MetNIQ involved in methionine import. Responsible for energy coupling to the transport system. The chain is Methionine import ATP-binding protein MetN 2 from Listeria monocytogenes serotype 4b (strain F2365).